The primary structure comprises 271 residues: MLRFFPQKNKYVEEASQYAFDKEGQIPQHIAIIMDGNGRWAQNRRLPRIAGHKEGMDTVKKITKHASHLGVKVLTLYAFSTENWKRPTDEVNFLMQLPVDFFDTFVPELIKENVKVNVMGYQEFLPSHTQDAVKRAIEQTKDNTGMVLNFALNYGARAELLTAMKQIAAEVSEKAYTADEITEETIADHLMTGFLPTELRDPELLIRTSGEERISNFLLWQIAYSELFFTKALWPDFSGDTLETAIASFQNRNRRFGGLKETTETEGSDPQ.

Residue aspartate 35 is part of the active site. Position 35 (aspartate 35) interacts with Mg(2+). Residues glycine 36–arginine 39, tryptophan 40, arginine 48, histidine 52, and serine 80–glutamate 82 contribute to the substrate site. Asparagine 83 functions as the Proton acceptor in the catalytic mechanism. Substrate contacts are provided by residues tryptophan 84, arginine 86, arginine 207, and arginine 213–serine 215. Glutamate 226 is a Mg(2+) binding site.

This sequence belongs to the UPP synthase family. As to quaternary structure, homodimer. Mg(2+) is required as a cofactor.

Functionally, catalyzes the condensation of isopentenyl diphosphate (IPP) with allylic pyrophosphates generating different type of terpenoids. The polypeptide is Isoprenyl transferase (Enterococcus faecalis (strain ATCC 700802 / V583)).